Reading from the N-terminus, the 530-residue chain is NADH-quinone oxidoreductase subunit C/D (530 aa).

The interval 1-144 (MQEIQFIVPA…NPLCMANEET (144 aa)) is NADH dehydrogenase I subunit C. Positions 171-530 (EYVVNIGPQH…LDYVVPDIDR (360 aa)) are NADH dehydrogenase I subunit D.

The protein in the N-terminal section; belongs to the complex I 30 kDa subunit family. It in the C-terminal section; belongs to the complex I 49 kDa subunit family. As to quaternary structure, NDH-1 is composed of 13 different subunits. Subunits NuoB, CD, E, F, and G constitute the peripheral sector of the complex.

It localises to the cell inner membrane. It catalyses the reaction a quinone + NADH + 5 H(+)(in) = a quinol + NAD(+) + 4 H(+)(out). Functionally, NDH-1 shuttles electrons from NADH, via FMN and iron-sulfur (Fe-S) centers, to quinones in the respiratory chain. The immediate electron acceptor for the enzyme in this species is believed to be a menaquinone. Couples the redox reaction to proton translocation (for every two electrons transferred, four hydrogen ions are translocated across the cytoplasmic membrane), and thus conserves the redox energy in a proton gradient. The sequence is that of NADH-quinone oxidoreductase subunit C/D from Bacteroides thetaiotaomicron (strain ATCC 29148 / DSM 2079 / JCM 5827 / CCUG 10774 / NCTC 10582 / VPI-5482 / E50).